The following is a 340-amino-acid chain: Aliphatic sulfonates import ATP-binding protein SsuB 1 (340 aa).

Residues 44 to 72 (THHHARVAAQGHARGDAQPPAGALARDDG) form a disordered region. In terms of domain architecture, ABC transporter spans 80–299 (VQLRGVGKRY…ARASAGFAAL (220 aa)). 112-119 (GRSGCGKS) is a binding site for ATP.

This sequence belongs to the ABC transporter superfamily. Aliphatic sulfonates importer (TC 3.A.1.17.2) family. In terms of assembly, the complex is composed of two ATP-binding proteins (SsuB), two transmembrane proteins (SsuC) and a solute-binding protein (SsuA).

Its subcellular location is the cell inner membrane. The enzyme catalyses ATP + H2O + aliphatic sulfonate-[sulfonate-binding protein]Side 1 = ADP + phosphate + aliphatic sulfonateSide 2 + [sulfonate-binding protein]Side 1.. Part of the ABC transporter complex SsuABC involved in aliphatic sulfonates import. Responsible for energy coupling to the transport system. The protein is Aliphatic sulfonates import ATP-binding protein SsuB 1 of Paraburkholderia xenovorans (strain LB400).